A 356-amino-acid polypeptide reads, in one-letter code: D-alanine--D-alanine ligase (356 aa).

In terms of domain architecture, ATP-grasp spans Lys-134–Asp-339. Lys-167 to Glu-222 is an ATP binding site. Residues Asp-293, Glu-306, and Asn-308 each coordinate Mg(2+).

It belongs to the D-alanine--D-alanine ligase family. It depends on Mg(2+) as a cofactor. Mn(2+) is required as a cofactor.

It localises to the cytoplasm. It carries out the reaction 2 D-alanine + ATP = D-alanyl-D-alanine + ADP + phosphate + H(+). Its pathway is cell wall biogenesis; peptidoglycan biosynthesis. In terms of biological role, cell wall formation. This is D-alanine--D-alanine ligase from Staphylococcus haemolyticus (strain JCSC1435).